The sequence spans 147 residues: Endoribonuclease YbeY (147 aa).

Zn(2+) contacts are provided by His-107, His-111, and His-117.

Belongs to the endoribonuclease YbeY family. Zn(2+) serves as cofactor.

It localises to the cytoplasm. Single strand-specific metallo-endoribonuclease involved in late-stage 70S ribosome quality control and in maturation of the 3' terminus of the 16S rRNA. The protein is Endoribonuclease YbeY of Solibacter usitatus (strain Ellin6076).